Here is a 557-residue protein sequence, read N- to C-terminus: Inositol-3-phosphate synthase 1 (557 aa).

Positions 67, 68, 69, 70, 141, 177, 178, 188, 191, 228, 229, 230, 231, 278, 279, 303, 306, 337, 338, 339, and 352 each coordinate NAD(+). Phosphoserine is present on serine 279. Position 357 is a phosphoserine (serine 357). Residues glycine 390, aspartate 391, aspartate 419, and serine 420 each coordinate NAD(+). Serine 523 is modified (phosphoserine). Residues 527–557 (CKKGSAPTAPNGCTGDANGHSQAEAPQMPTT) form a disordered region.

The protein belongs to the myo-inositol 1-phosphate synthase family. NAD(+) serves as cofactor. As to expression, expressed in testis (at protein level).

The protein resides in the cytoplasm. The enzyme catalyses D-glucose 6-phosphate = 1D-myo-inositol 3-phosphate. It participates in polyol metabolism; myo-inositol biosynthesis; myo-inositol from D-glucose 6-phosphate: step 1/2. In terms of biological role, key enzyme in myo-inositol biosynthesis pathway that catalyzes the conversion of glucose 6-phosphate to 1-myo-inositol 1-phosphate in a NAD-dependent manner. Rate-limiting enzyme in the synthesis of all inositol-containing compounds. The sequence is that of Inositol-3-phosphate synthase 1 (ISYNA1) from Bos taurus (Bovine).